The sequence spans 2448 residues: MNFHKGQPKEDLRVLFGPQCPDITDSITHIRDAISKDPTGLGFLTNILDELPSLWPTIAGAWPALKNVEGESQLLALGRLFEHESEDRVEASNLMMTPITVMRHIVDFWNLQDVATHPAFPSSSLSETEMPRIVDTQGFCVGLLAAIAVACSRNTQEFQYVASNAIRLSLCVGALVDLDEILCGSTTSLAVSAERVKQEIHDHGLRTKQLSLRGRFHHEAHREGIQHIMKLCTNDSRFKLPRSDALLTPLRSSQGGEIFQQEALLHTVALDSILCAKANWYDVVSALINSTEMTVDQSHLLSIGPEEFVPRSARSRSVARRELQSYAMQGFSNESPQPSTASLSNSVQTFDSRPQAAEASPIAITGMACRYPNADTLAQLWDLLELGRCTVKSPPESRFHMSDLQREPKGPFWGHFLERPDVFDHRFFNISAREAESMDPQQRVALQVAYEAMESAGYLGWQPNGLSRDIGCYVGVGSEDYTENVASRNANAFSITGTLQSFIAGRISHHFGWSGPSISLDTACSSAAVAIHLACKALQTNDCKIALAGGVNVLTNPRVYQNLSAASFLSPSGACKPFDASADGYCRGEGAGLFVLRPLQDAIDNGDPILGVIAGSAVNQGSNNSPITVPDAEAQRSLYNKAMSLAGVSPDEVTYVEAHGTGTQVGDPIELDSLRRTFGGPQRRNSLHIGSIKGNIGHTETSSGAAGLLKTILMLQQQRIPRQANFNQLNPKVKSLTPDRLVIASESTEWASTERVAMVSNYGASGSNAALIVKEHAPIRSEQNGTAPEYIQNVPILVSARSEESLRAYCGALRATLLSHPPSETLVQKLAYNLAMKQNRDLPLNLTFSTSSDATSLSARLEAISTGASADLIQKRPSNEPPVVLCFGGQNGLTATISKEVFDASALLRTHLEDCEEVGRTLGLPSLFPTIFSSAPITNIIHLHFILFSIQYASAKAWLDSGLRVSRIVGHSFGQLTALSVAGSLSVRDGIHLVTERARLIESSWGPESGIMLAVEGTDIEVQQLLDQTGHIADVACYNGPRQQVLAGTAESIAAIENAAARTPSASKLRLTRLQNSHAFHSRLVDSIVPAIMEVAGSLVYQTPIIPIEACSASGDWSTITAAEIVEHSRMPVYFRRAVERVAEKLQAPAVWLEAGSASPIIPMVRRVLESSSVANTYHKIDLGGSSGAQNLANVTSALWAQGVHVQFWPFDRAQHGSFKWMNLPPYQFAQNSHWVDFDPAAFSSAGPSSGKQSAGQEAGLLCQLSESPDERLYHVNIQDALYRACTQGHAVLNQTLCPASMYMEMVLRAAASIFPTGNASEPAMSHIEDLTISSPLVLDPQGDVFLRLTSDGAGPTRPWLFSIFSSESNDHTSVHAEGTVCLHQERSRALARFQSMDRLLDSARSKTIEADPASNGLKGSTVYAALESVTNYGDYFRGVKKVFANGREASGLVSMMPSASETNCDPILLDNFLQVAGIHVNCLSDRRSSEVFVCNAIGETFVINSLLKQKNGASPSTWKVYTSYVRPSKTEIACDIYVMDCQTDTLSAAMMGVRFTSVSIRSLTRALAKLNNNVLETAEAQSVVEPAIPAEKSVVTATPSAPAADGGGAKDLATVQEMLCELFGVSVAEVSPSVSLVDIGVDSLMSTEVLSEIKKRFQVDMSYTTLVDIPNIQGLVEHIFPGHSHAAPSQPVVETAPVQSVAPQAVSHVPTPANNGPPLVSVARQCFDTTHAAVSHTSDAHWTGFFHTTYPKQMTLLTAYILEAFRALGSPLEASEPNEVLIPISVLPRHEQLRKHLYKILESVGLVRQMPTGELVRTTTPIPLSQSHDLHTQIRAEYPPYALEHDLLQITAPRLADCLTGKADGVSLIFQDANTRRLVGDVYAQSPVFKSGNLYLARYLLDVVQSFGSSRTIKILEIGAGTGGTTKNLLEKLSTIPGLSTRLEYTFTDISPSLVAAGRKTFANYNFMRYETLNVENDPPSALSGQYDIVLSTNCVHATRNLRESCTNIRKLLRPDGILCLVELTRDIFWLDLVFGLLEGWWRFEDGREHALATEMMWDQTLRQSGFEWVDWTNNETVESNALRVIVASPTGNSSTATMSPSKLTKMETVVWGERDNLQLRADIYYPETVDTTRKQRPIALMIHGGGHVMLSRKDIRPAQTQTLLDAGFLPVSIDYRLCPEVSLAEGPMADARDALSWVRRVLPNIPLLRADIRPDGNQVVAIGWSTGGHLAMTLPFTAPAAGISAPNAVLAFYCPTNYEDPFWSNPNFPFGQTVASNEMEYDVWEGLQSMPIAGYNPALKERPLGGWMSTRDPRSRIALHMNWTGQTLPVLLKACTIKGNTEKCSPDDLSRPTEEEIQAVSPNYQIRVGRYNTPTFLIHGTSDDLVPCAQTESTHGALTASGVEAELRVVQEAAHLFDLYPASHAGQEAKAAVAEGYEFLRRHVQL.

The segment at 14–226 is N-terminal acylcarrier protein transacylase domain (SAT); the sequence is VLFGPQCPDI…HHEAHREGIQ (213 aa). Residues 330 to 350 form a disordered region; sequence GFSNESPQPSTASLSNSVQTF. In terms of domain architecture, Ketosynthase family 3 (KS3) spans 359 to 775; it reads ASPIAITGMA…GSNAALIVKE (417 aa). Catalysis depends on for beta-ketoacyl synthase activity residues C524, H659, and H698. Residues 885-1188 are malonyl-CoA:ACP transacylase (MAT) domain; that stretch reads LCFGGQNGLT…HKIDLGGSSG (304 aa). S972 functions as the For acyl/malonyl transferase activity in the catalytic mechanism. The N-terminal hotdog fold stretch occupies residues 1256–1388; it reads GQEAGLLCQL…GTVCLHQERS (133 aa). The PKS/mFAS DH domain occupies 1256-1565; the sequence is GQEAGLLCQL…FTSVSIRSLT (310 aa). A product template (PT) domain region spans residues 1261 to 1564; the sequence is LLCQLSESPD…RFTSVSIRSL (304 aa). The Proton acceptor; for dehydratase activity role is filled by H1290. The tract at residues 1414-1565 is C-terminal hotdog fold; sequence ASNGLKGSTV…FTSVSIRSLT (152 aa). The active-site Proton donor; for dehydratase activity is D1471. The Carrier domain occupies 1610–1684; the sequence is AKDLATVQEM…GLVEHIFPGH (75 aa). Position 1644 is an O-(pantetheine 4'-phosphoryl)serine (S1644). The interval 1841–2076 is methyltransferase (CMeT) domain; sequence PYALEHDLLQ…GFEWVDWTNN (236 aa). Residues S2227, D2385, and H2417 each act as for thioesterase activity in the active site.

It localises to the cytoplasm. It is found in the cytosol. The catalysed reaction is 3 malonyl-CoA + acetyl-CoA + S-adenosyl-L-methionine + H(+) = 5-methylorsellinate + S-adenosyl-L-homocysteine + 3 CO2 + 4 CoA. It participates in secondary metabolite biosynthesis; terpenoid biosynthesis. In terms of biological role, non-reducing polyketide synthase; part of the gene cluster that mediates the biosynthesis of mycophenolic acid (MPA), the first isolated antibiotic natural product in the world obtained from a culture of Penicillium brevicompactum in 1893. MpaC catalyzes the synthesis of 5-methylorsellinic acid (5MOA) via the condensation of 1 acetyl-CoA starter unit with 3 malonyl-CoA units and one methylation step. The first step of the pathway is the synthesis of 5-methylorsellinic acid (5MOA) by the cytosolic polyketide synthase mpaC. 5MOA is then converted to the phthalide compound 5,7-dihydroxy-4,6-dimethylphthalide (DHMP) by the endoplasmic reticulum-bound cytochrome P450 monooxygenase mpaDE. MpaDE first catalyzes hydroxylation of 5-MOA to 4,6-dihydroxy-2-(hydroxymethyl)-3-methylbenzoic acid (DHMB). MpaDE then acts as a lactone synthase that catalyzes the ring closure to convert DHMB into DHMP. The next step is the prenylation of DHMP by the Golgi apparatus-associated prenyltransferase mpaA to yield farnesyl-DHMP (FDHMP). The ER-bound oxygenase mpaB then mediates the oxidative cleavage the C19-C20 double bond in FDHMP to yield FDHMP-3C via a mycophenolic aldehyde intermediate. The O-methyltransferase mpaG catalyzes the methylation of FDHMP-3C to yield MFDHMP-3C. After the cytosolic methylation of FDHMP-3C, MFDHMP-3C enters into peroxisomes probably via free diffusion due to its low molecular weight. Upon a peroxisomal CoA ligation reaction, catalyzed by a beta-oxidation component enzyme acyl-CoA ligase ACL891, MFDHMP-3C-CoA would then be restricted to peroxisomes for the following beta-oxidation pathway steps. The peroxisomal beta-oxidation machinery than converts MFDHMP-3C-CoA into MPA_CoA, via a beta-oxidation chain-shortening process. Finally mpaH acts as a peroxisomal acyl-CoA hydrolase with high substrate specificity toward MPA-CoA to release the final product MPA. This Penicillium brevicompactum protein is Non-reducing polyketide synthase mapC.